A 261-amino-acid polypeptide reads, in one-letter code: Chanoclavine-I dehydrogenase ifgE (261 aa).

The signal sequence occupies residues 1–20 (MASVKSRVFAITGGASGIGA). The NADP(+) site is built by Ile18, Lys48, Asp66, Arg132, Tyr166, Lys170, and Thr201. Residue Tyr166 is the Proton acceptor of the active site. Lys170 serves as the catalytic Lowers pKa of active site Tyr.

Belongs to the short-chain dehydrogenases/reductases (SDR) family.

It participates in alkaloid biosynthesis; ergot alkaloid biosynthesis. In terms of biological role, chanoclavine-I dehydrogenase; part of the gene cluster that mediates the biosynthesis of isofumigaclavines, fungal ergot alkaloids. The tryptophan dimethylallyltransferase ifgA catalyzes the first step of ergot alkaloid biosynthesis by condensing dimethylallyl diphosphate (DMAP) and tryptophan to form 4-dimethylallyl-L-tryptophan. The second step is catalyzed by the methyltransferase ifgB that methylates 4-dimethylallyl-L-tryptophan in the presence of S-adenosyl-L-methionine, resulting in the formation of N-methyl-dimethylallyl-L-tryptophan. The catalase ifgD and the FAD-dependent oxidoreductase ifgC then transform N-methyl-dimethylallyl-L-tryptophan to chanoclavine-I which is further oxidized by ifgE in the presence of NAD(+), resulting in the formation of chanoclavine-I aldehyde. The chanoclavine-I aldehyde reductases ifgG and/or fgaOx3 reduce chanoclavine-I aldehyde to dihydrochanoclavine-I aldehyde that spontaneously dehydrates to form 6,8-dimethyl-6,7-didehydroergoline. The festuclavine dehydrogenases ifgF1 and/or ifgF2 then catalyze the reduction of 6,8-dimethyl-6,7-didehydroergoline to form festuclavine. Hydrolysis of festuclavine by a yet undetermined cytochrome P450 monooxygenase (called ifgH) then leads to the formation of isofumigaclavine B which is in turn acetylated by ifgI to isofumigaclavine A. Penicillium roqueforti has interestingly at least two sets of genes for the consumption of chanoclavine-I aldehyde on three different loci, the OYEs ifgG/fgaOx3 and the festuclavine synthase homologs ifgF1/ifgF2. The reason for the duplication of these genes is unclear, probably to ensure the conversion of chanoclavine-I aldehyde by differential gene expression under various environmental conditions. The chain is Chanoclavine-I dehydrogenase ifgE from Penicillium roqueforti (strain FM164).